Reading from the N-terminus, the 382-residue chain is Proton extrusion protein PxcA (382 aa).

Transmembrane regions (helical) follow at residues 156–176, 257–277, 305–325, and 340–360; these read TLIS…VQQV, AVKN…VCLF, IILF…TVLL, and FILL…KYWI.

Belongs to the CemA family.

It is found in the cell inner membrane. Its function is as follows. Required for H(+) efflux immediately after light irradiation to form a rapid H(+) concentration gradient across the thylakoid membranes. Together with PxcL, contributes to transient H(+) uptake following dark to light transition. The protein is Proton extrusion protein PxcA of Synechococcus sp. (strain CC9311).